We begin with the raw amino-acid sequence, 615 residues long: DNA mismatch repair protein MutL (615 aa).

Belongs to the DNA mismatch repair MutL/HexB family.

Functionally, this protein is involved in the repair of mismatches in DNA. It is required for dam-dependent methyl-directed DNA mismatch repair. May act as a 'molecular matchmaker', a protein that promotes the formation of a stable complex between two or more DNA-binding proteins in an ATP-dependent manner without itself being part of a final effector complex. This is DNA mismatch repair protein MutL from Histophilus somni (strain 2336) (Haemophilus somnus).